The sequence spans 983 residues: Ephrin type-A receptor 3 (983 aa).

Positions 1-19 (MDRRRLPLLLLCAALGSAG) are cleaved as a signal peptide. The Extracellular segment spans residues 20 to 540 (RLSARPGNEV…SFSISSENSQ (521 aa)). In terms of domain architecture, Eph LBD spans 28-206 (EVNLLDSKTI…YFKKCPFTVK (179 aa)). 5 N-linked (GlcNAc...) asparagine glycosylation sites follow: Asn-231, Asn-336, Asn-390, Asn-403, and Asn-492. Fibronectin type-III domains are found at residues 324 to 434 (PPSA…TNQA) and 435 to 530 (APSP…TSPD). The chain crosses the membrane as a helical span at residues 541–564 (VVMIAISAAVAIILLTVVVYVLIG). The Cytoplasmic portion of the chain corresponds to 565-983 (RFCGYKKSKH…THTKNSPVPV (419 aa)). Tyr-596 and Tyr-602 each carry phosphotyrosine; by autocatalysis. The 262-residue stretch at 621–882 (ISIDKVVGAG…QIVSILDKLI (262 aa)) folds into the Protein kinase domain. ATP is bound by residues 628–633 (GAGEFG), Lys-653, and 700–706 (EYMENGS). The residue at position 701 (Tyr-701) is a Phosphotyrosine; by autocatalysis. The active-site Proton acceptor is the Asp-746. Residue 750-751 (RN) participates in ATP binding. Position 779 is a phosphotyrosine; by autocatalysis (Tyr-779). Positions 911–975 (SAFRTAGDWL…VSSIKTLETH (65 aa)) constitute an SAM domain. The PDZ-binding motif lies at 981–983 (VPV).

This sequence belongs to the protein kinase superfamily. Tyr protein kinase family. Ephrin receptor subfamily. Heterotetramer upon binding of the ligand. The heterotetramer is composed of an ephrin dimer and a receptor dimer. Oligomerization is probably required to induce biological responses. Autophosphorylates upon activation by EFNA5. Highly expressed in the developing brain and embryonic tissues. In adult, the greatest levels of expression occur in the brain. It is expressed in a graded manner across the retina with the highest expression at its temporal pole. Detectable in all other adult tissues examined, except the liver.

The protein resides in the cell membrane. It carries out the reaction L-tyrosyl-[protein] + ATP = O-phospho-L-tyrosyl-[protein] + ADP + H(+). Functionally, receptor tyrosine kinase which binds promiscuously membrane-bound ephrin family ligands residing on adjacent cells, leading to contact-dependent bidirectional signaling into neighboring cells. The signaling pathway downstream of the receptor is referred to as forward signaling while the signaling pathway downstream of the ephrin ligand is referred to as reverse signaling. Highly promiscuous for ephrin-A ligands it binds preferentially EFNA5. Upon activation by EFNA5 regulates cell-cell adhesion, cytoskeletal organization and cell migration. Plays a role in cardiac cells migration and differentiation probably through activation by EFNA1. Involved in the retinotectal mapping of neurons. May also control the segregation but not the guidance of motor and sensory axons during neuromuscular circuit development. The sequence is that of Ephrin type-A receptor 3 (EPHA3) from Gallus gallus (Chicken).